A 194-amino-acid chain; its full sequence is Fibroblast growth factor 7 (194 aa).

The first 31 residues, 1–31 (MRKWILTRILPTPLYRPCFHLVCLVGTISLA), serve as a signal peptide directing secretion. 2 N-linked (GlcNAc...) asparagine glycosylation sites follow: asparagine 45 and asparagine 149.

This sequence belongs to the heparin-binding growth factors family. Interacts with FGFBP1. Interacts with FGFR2. Affinity between fibroblast growth factors (FGFs) and their receptors is increased by heparan sulfate glycosaminoglycans that function as coreceptors.

Its function is as follows. Growth factor active on keratinocytes. Possible major paracrine effector of normal epithelial cell proliferation. In Rattus norvegicus (Rat), this protein is Fibroblast growth factor 7 (Fgf7).